Reading from the N-terminus, the 240-residue chain is UDP-2,3-diacylglucosamine hydrolase (240 aa).

Mn(2+) is bound by residues Asp7, His9, Asp40, Asn78, and His113. 78 to 79 contributes to the substrate binding site; it reads NR. Substrate contacts are provided by Asp121, Ser159, Lys166, and His194. 2 residues coordinate Mn(2+): His194 and His196.

The protein belongs to the LpxH family. The cofactor is Mn(2+).

Its subcellular location is the cell inner membrane. The enzyme catalyses UDP-2-N,3-O-bis[(3R)-3-hydroxytetradecanoyl]-alpha-D-glucosamine + H2O = 2-N,3-O-bis[(3R)-3-hydroxytetradecanoyl]-alpha-D-glucosaminyl 1-phosphate + UMP + 2 H(+). The protein operates within glycolipid biosynthesis; lipid IV(A) biosynthesis; lipid IV(A) from (3R)-3-hydroxytetradecanoyl-[acyl-carrier-protein] and UDP-N-acetyl-alpha-D-glucosamine: step 4/6. Hydrolyzes the pyrophosphate bond of UDP-2,3-diacylglucosamine to yield 2,3-diacylglucosamine 1-phosphate (lipid X) and UMP by catalyzing the attack of water at the alpha-P atom. Involved in the biosynthesis of lipid A, a phosphorylated glycolipid that anchors the lipopolysaccharide to the outer membrane of the cell. This chain is UDP-2,3-diacylglucosamine hydrolase, found in Pseudomonas putida (strain ATCC 700007 / DSM 6899 / JCM 31910 / BCRC 17059 / LMG 24140 / F1).